The following is a 276-amino-acid chain: Diaminopimelate epimerase (276 aa).

N13, Q46, and N66 together coordinate substrate. C75 functions as the Proton donor in the catalytic mechanism. Substrate-binding positions include 76–77 (GN), N159, N192, and 210–211 (ER). The active-site Proton acceptor is C219. Residue 220–221 (GS) participates in substrate binding.

It belongs to the diaminopimelate epimerase family. As to quaternary structure, homodimer.

It is found in the cytoplasm. The enzyme catalyses (2S,6S)-2,6-diaminopimelate = meso-2,6-diaminopimelate. Its pathway is amino-acid biosynthesis; L-lysine biosynthesis via DAP pathway; DL-2,6-diaminopimelate from LL-2,6-diaminopimelate: step 1/1. Catalyzes the stereoinversion of LL-2,6-diaminopimelate (L,L-DAP) to meso-diaminopimelate (meso-DAP), a precursor of L-lysine and an essential component of the bacterial peptidoglycan. The chain is Diaminopimelate epimerase from Vibrio parahaemolyticus serotype O3:K6 (strain RIMD 2210633).